A 176-amino-acid chain; its full sequence is Nucleoside triphosphate/diphosphate phosphatase (176 aa).

The Proton donor role is filled by Arg23. 6 residues coordinate Mg(2+): Asn87, Asp103, Asp105, Asp107, Asp120, and Glu123.

This sequence belongs to the Ntdp family. It depends on Mg(2+) as a cofactor.

It carries out the reaction a ribonucleoside 5'-triphosphate + H2O = a ribonucleoside 5'-diphosphate + phosphate + H(+). The enzyme catalyses a ribonucleoside 5'-diphosphate + H2O = a ribonucleoside 5'-phosphate + phosphate + H(+). Has nucleoside phosphatase activity towards nucleoside triphosphates and nucleoside diphosphates. The chain is Nucleoside triphosphate/diphosphate phosphatase from Lactococcus lactis subsp. cremoris (strain MG1363).